A 528-amino-acid polypeptide reads, in one-letter code: ATP synthase subunit alpha 1 (528 aa).

177–184 contributes to the ATP binding site; it reads GDRQTGKT.

Belongs to the ATPase alpha/beta chains family. In terms of assembly, F-type ATPases have 2 components, CF(1) - the catalytic core - and CF(0) - the membrane proton channel. CF(1) has five subunits: alpha(3), beta(3), gamma(1), delta(1), epsilon(1). CF(0) has three main subunits: a(1), b(2) and c(9-12). The alpha and beta chains form an alternating ring which encloses part of the gamma chain. CF(1) is attached to CF(0) by a central stalk formed by the gamma and epsilon chains, while a peripheral stalk is formed by the delta and b chains.

The protein resides in the cell inner membrane. The enzyme catalyses ATP + H2O + 4 H(+)(in) = ADP + phosphate + 5 H(+)(out). Functionally, produces ATP from ADP in the presence of a proton gradient across the membrane. The alpha chain is a regulatory subunit. In Pseudoalteromonas atlantica (strain T6c / ATCC BAA-1087), this protein is ATP synthase subunit alpha 1.